We begin with the raw amino-acid sequence, 246 residues long: MTMTLAKRFTAEVVGTFILVFFGPGAAVITLMIANGADKPNEFNIGIGALGGLGDWFAIGMAFALAIAAVIYSLGRISGAHINPAVTIALWSIGRFPGREVVPYIVAQFIGAALGSLLFLACVGPAAATVGGLGATAPFPGIGYGQAILTEAIGTFLLMLVIMGVAVDERAPPGFAGLVIGLTVGGIITTIGNITGSSLNPARTFGPYLGDSLMGINLWQYFPIYVIGPIVGAVAAAWLYNYLAKE.

The Cytoplasmic portion of the chain corresponds to 1 to 12 (MTMTLAKRFTAE). The chain crosses the membrane as a helical span at residues 13 to 33 (VVGTFILVFFGPGAAVITLMI). Residues 34-56 (ANGADKPNEFNIGIGALGGLGDW) lie on the Extracellular side of the membrane. The chain crosses the membrane as a helical span at residues 57–77 (FAIGMAFALAIAAVIYSLGRI). The Cytoplasmic segment spans residues 78-104 (SGAHINPAVTIALWSIGRFPGREVVPY). Positions 83–85 (NPA) match the NPA 1 motif. The chain crosses the membrane as a helical span at residues 105-125 (IVAQFIGAALGSLLFLACVGP). Topologically, residues 126–146 (AAATVGGLGATAPFPGIGYGQ) are extracellular. The helical transmembrane segment at 147–167 (AILTEAIGTFLLMLVIMGVAV) threads the bilayer. The Cytoplasmic segment spans residues 168 to 173 (DERAPP). The chain crosses the membrane as a helical span at residues 174–194 (GFAGLVIGLTVGGIITTIGNI). Residues 195–217 (TGSSLNPARTFGPYLGDSLMGIN) are Extracellular-facing. The short motif at 200–202 (NPA) is the NPA 2 element. A helical membrane pass occupies residues 218–238 (LWQYFPIYVIGPIVGAVAAAW). The Cytoplasmic portion of the chain corresponds to 239–246 (LYNYLAKE).

Belongs to the MIP/aquaporin (TC 1.A.8) family.

It localises to the cell membrane. In terms of biological role, channel that permits osmotically driven movement of water in both directions. The protein is Probable aquaporin AqpM (aqpM) of Archaeoglobus fulgidus (strain ATCC 49558 / DSM 4304 / JCM 9628 / NBRC 100126 / VC-16).